Here is a 459-residue protein sequence, read N- to C-terminus: MDLDTITSISTPMGEGAIGIVRLSGPQAVEIADKLYKGKHLLNDVPSHTINYGHIIDPESKEVVEEVMVSVLRAPKTFTREDIIEINCHGGILTINRVLELTMTYGARLAEPGEFTKRAFLNGRIDLSQAEAVMDFVRSKTDRASKVAMNQIEGRLSDLIKKQRQSILEILAQVEVNIDYPEYDDVEDATTEFLLEQSKEIKQEINRLLDTGAQGKIMREGLSTVIVGKPNVGKSSMLNNLIQDNKAIVTEVAGTTRDVLEEYVNVRGVPLRLVDTAGIRETEDIVEKIGVERSRKALSQADLILFVLNNNEALTQEDYTLYEVVKNEDVIVIVNKMDLEQNIDINEVKDMIGDTPLIQTSMLKQEGIDELEIQIRDLFFGGEVQNQDMTYVSNSRHISLLKQARQTIQDAIDAAESGVPMDMVQIDLTRTWEILGEIIGETASDELIDQLFSQFCLGK.

Arg-22, Glu-85, and Arg-124 together coordinate (6S)-5-formyl-5,6,7,8-tetrahydrofolate. In terms of domain architecture, TrmE-type G spans 221–380 (GLSTVIVGKP…LEIQIRDLFF (160 aa)). A K(+)-binding site is contributed by Asn-231. Residues 231 to 236 (NVGKSS), 250 to 256 (TEVAGTT), and 275 to 278 (DTAG) each bind GTP. Mg(2+) is bound at residue Ser-235. Positions 250, 252, and 255 each coordinate K(+). Thr-256 is a binding site for Mg(2+). Residue Lys-459 participates in (6S)-5-formyl-5,6,7,8-tetrahydrofolate binding.

The protein belongs to the TRAFAC class TrmE-Era-EngA-EngB-Septin-like GTPase superfamily. TrmE GTPase family. Homodimer. Heterotetramer of two MnmE and two MnmG subunits. It depends on K(+) as a cofactor.

The protein localises to the cytoplasm. Exhibits a very high intrinsic GTPase hydrolysis rate. Involved in the addition of a carboxymethylaminomethyl (cmnm) group at the wobble position (U34) of certain tRNAs, forming tRNA-cmnm(5)s(2)U34. In Staphylococcus aureus (strain bovine RF122 / ET3-1), this protein is tRNA modification GTPase MnmE.